The following is a 510-amino-acid chain: RNA-splicing ligase RtcB homolog (510 aa).

The Mn(2+) site is built by Asp-124, Cys-127, His-232, His-264, and His-358. Residue 231 to 235 (NHYAE) participates in GMP binding. Residues 358–359 (HN), 407–410 (GGTM), Ser-414, 433–436 (HGAG), and Lys-509 contribute to the GMP site. The GMP-histidine intermediate role is filled by His-433.

The protein belongs to the RtcB family. In terms of assembly, catalytic component of the tRNA-splicing ligase complex. Mn(2+) serves as cofactor.

The catalysed reaction is a 3'-end 3'-phospho-ribonucleotide-RNA + a 5'-end dephospho-ribonucleoside-RNA + GTP = a ribonucleotidyl-ribonucleotide-RNA + GMP + diphosphate. It carries out the reaction a 3'-end 2',3'-cyclophospho-ribonucleotide-RNA + a 5'-end dephospho-ribonucleoside-RNA + GTP + H2O = a ribonucleotidyl-ribonucleotide-RNA + GMP + diphosphate + H(+). Functionally, catalytic subunit of the tRNA-splicing ligase complex that acts by directly joining spliced tRNA halves to mature-sized tRNAs by incorporating the precursor-derived splice junction phosphate into the mature tRNA as a canonical 3',5'-phosphodiester. May act as an RNA ligase with broad substrate specificity, and may function toward other RNAs. This Trichoplax adhaerens (Trichoplax reptans) protein is RNA-splicing ligase RtcB homolog.